We begin with the raw amino-acid sequence, 223 residues long: ATP synthase subunit a 2 (223 aa).

The next 5 membrane-spanning stretches (helical) occupy residues 17–37 (VAIT…ALVC), 77–97 (FLPL…SGVL), 106–126 (KIET…YFGV), 173–193 (FIIG…LMAL), and 195–215 (ILVG…FIGA).

Belongs to the ATPase A chain family. F-type ATPases have 2 components, CF(1) - the catalytic core - and CF(0) - the membrane proton channel. CF(1) has five subunits: alpha(3), beta(3), gamma(1), delta(1), epsilon(1). CF(0) has four main subunits: a, b, b' and c.

It localises to the cell inner membrane. Functionally, key component of the proton channel; it plays a direct role in the translocation of protons across the membrane. In Bradyrhizobium sp. (strain BTAi1 / ATCC BAA-1182), this protein is ATP synthase subunit a 2.